The following is a 179-amino-acid chain: MLRFKELYQKEIISNLQKEFSYKNKHEIPAIEKIVINMGVGEAIADSKVIDKAVNDLTLISGQKPFVTSARKSIATFKLRDGMKIGCKVTLRKDRMYDFLERLVIVALPRVKEFRGFSYKSFDGKGNFTFGLKEQIVFPEINYDKIDSIRGMDITIVTSAKTDKEGKSLLSGFNLPFYN.

It belongs to the universal ribosomal protein uL5 family. In terms of assembly, part of the 50S ribosomal subunit; part of the 5S rRNA/L5/L18/L25 subcomplex. Contacts the 5S rRNA and the P site tRNA. Forms a bridge to the 30S subunit in the 70S ribosome.

In terms of biological role, this is one of the proteins that bind and probably mediate the attachment of the 5S RNA into the large ribosomal subunit, where it forms part of the central protuberance. In the 70S ribosome it contacts protein S13 of the 30S subunit (bridge B1b), connecting the 2 subunits; this bridge is implicated in subunit movement. Contacts the P site tRNA; the 5S rRNA and some of its associated proteins might help stabilize positioning of ribosome-bound tRNAs. This is Large ribosomal subunit protein uL5 from Rickettsia bellii (strain OSU 85-389).